The following is a 767-amino-acid chain: Protein transport protein Sec23B (767 aa).

Ala-2 carries the N-acetylalanine modification. Zn(2+) is bound by residues Cys-61, Cys-66, Cys-85, and Cys-88. At Lys-564 the chain carries N6-acetyllysine. Residues 634–720 (PEPVLLDSSS…EHGGSQARFL (87 aa)) form a Gelsolin-like repeat.

Belongs to the SEC23/SEC24 family. SEC23 subfamily. COPII is composed of at least five proteins: the Sec23/24 complex, the Sec13/31 complex and Sar1. Interacts with SAR1A.

Its subcellular location is the cytoplasmic vesicle. The protein resides in the COPII-coated vesicle membrane. It localises to the endoplasmic reticulum membrane. The protein localises to the cytoplasm. It is found in the cytosol. Its function is as follows. Component of the coat protein complex II (COPII) which promotes the formation of transport vesicles from the endoplasmic reticulum (ER). The coat has two main functions, the physical deformation of the endoplasmic reticulum membrane into vesicles and the selection of cargo molecules for their transport to the Golgi complex. In Mus musculus (Mouse), this protein is Protein transport protein Sec23B.